Here is a 352-residue protein sequence, read N- to C-terminus: N-acetyl-gamma-glutamyl-phosphate reductase (352 aa).

The active site involves cysteine 156.

It belongs to the NAGSA dehydrogenase family. Type 1 subfamily.

The protein localises to the cytoplasm. The catalysed reaction is N-acetyl-L-glutamate 5-semialdehyde + phosphate + NADP(+) = N-acetyl-L-glutamyl 5-phosphate + NADPH + H(+). Its pathway is amino-acid biosynthesis; L-arginine biosynthesis; N(2)-acetyl-L-ornithine from L-glutamate: step 3/4. Functionally, catalyzes the NADPH-dependent reduction of N-acetyl-5-glutamyl phosphate to yield N-acetyl-L-glutamate 5-semialdehyde. The protein is N-acetyl-gamma-glutamyl-phosphate reductase of Rhodospirillum rubrum (strain ATCC 11170 / ATH 1.1.1 / DSM 467 / LMG 4362 / NCIMB 8255 / S1).